A 298-amino-acid chain; its full sequence is Acetylglutamate kinase (298 aa).

Residues 69–70 (GG), R91, and N196 each bind substrate.

It belongs to the acetylglutamate kinase family. ArgB subfamily.

It localises to the cytoplasm. The enzyme catalyses N-acetyl-L-glutamate + ATP = N-acetyl-L-glutamyl 5-phosphate + ADP. It participates in amino-acid biosynthesis; L-arginine biosynthesis; N(2)-acetyl-L-ornithine from L-glutamate: step 2/4. Functionally, catalyzes the ATP-dependent phosphorylation of N-acetyl-L-glutamate. In Rhodopseudomonas palustris (strain ATCC BAA-98 / CGA009), this protein is Acetylglutamate kinase.